A 671-amino-acid polypeptide reads, in one-letter code: Condensin complex subunit 2 (671 aa).

Over residues 1–24 (MDESLTPNPKQKPASTTTRIQAPT) the composition is skewed to polar residues. Disordered stretches follow at residues 1–33 (MDES…GSND), 404–444 (NSWA…KQAE), and 510–564 (RRKN…ISQP). A Kleisin-gamma middle domain (GM domain) involved in chromosome-binding motif is present at residues 406 to 415 (WAGPDHWKYR). The segment covering 536–556 (VYDDDDGPFDDNENDQSDAED) has biased composition (acidic residues).

This sequence belongs to the CND2 (condensin subunit 2) family. Component of the condensin complex. As to expression, mostly expressed in flower buds and flowers, and, to a lower extent, in roots, stems, leaves and seedlings.

Its subcellular location is the cytoplasm. It is found in the chromosome. Regulatory subunit of the condensin complex, a complex required for conversion of interphase chromatin into mitotic-like condense chromosomes. The condensin complex probably introduces positive supercoils into relaxed DNA in the presence of type I topoisomerases and converts nicked DNA into positive knotted forms in the presence of type II topoisomerases. Essential protein. This Arabidopsis thaliana (Mouse-ear cress) protein is Condensin complex subunit 2 (CAPH).